Consider the following 388-residue polypeptide: Probable RNA-binding protein sce3 (388 aa).

The segment at 18–84 is disordered; the sequence is ESFGSTNWAD…GGMGSGYQRD (67 aa). Residues 38 to 50 are compositionally biased toward polar residues; that stretch reads DRTTSTYRATPSS. 3 positions are modified to phosphoserine: Ser49, Ser50, and Ser60. At Thr61 the chain carries Phosphothreonine. Ser64, Ser67, and Ser71 each carry phosphoserine. An RRM domain is found at 94–169; it reads FTAHVGNLSF…RPVRITVAEP (76 aa). A compositionally biased stretch (basic and acidic residues) spans 171–185; sequence RSFAREERSTGDWVR. The tract at residues 171–388 is disordered; sequence RSFAREERST…WTKIGKGRKH (218 aa). Residue Ser197 is modified to Phosphoserine. A compositionally biased stretch (basic and acidic residues) spans 208–229; the sequence is RFRDPARDPSDRVREEPREWVR. Residues 248 to 257 show a composition bias toward polar residues; it reads PRSSSNVNTE. Phosphoserine occurs at positions 250, 251, and 252. Positions 258–268 are enriched in low complexity; it reads ATPSATTTTSS. Basic and acidic residues predominate over residues 289–349; the sequence is RVEEKLAKRT…LGDGEKKSSE (61 aa). At Ser347 the chain carries Phosphoserine.

The protein resides in the cytoplasm. In Schizosaccharomyces pombe (strain 972 / ATCC 24843) (Fission yeast), this protein is Probable RNA-binding protein sce3 (sce3).